The sequence spans 258 residues: Tetraspanin-15 (258 aa).

Residues 1-20 (MGALGDSAYGARGRLIKFSY) lie on the Cytoplasmic side of the membrane. Residues 21–41 (IVTALISILFSISCICYGIWL) traverse the membrane as a helical segment. Topologically, residues 42–62 (LARRSQYAELVSPSLYVDVGR) are extracellular. The helical transmembrane segment at 63 to 83 (ILVIISILSILNYLICFYAIF) threads the bilayer. Topologically, residues 84-93 (KEMRCFVTSC) are cytoplasmic. The helical transmembrane segment at 94–114 (AVASIVIAVMLIIGGCIGLNF) threads the bilayer. Over 115 to 223 (RDQLTHYTPL…STCYEPLQND (109 aa)) the chain is Extracellular. Residues 224 to 244 (LLHVMNVASWLCITNAIVQII) form a helical membrane-spanning segment. At 245-258 (PSVAGCWYSKLIRK) the chain is on the cytoplasmic side.

The protein belongs to the tetraspanin (TM4SF) family. In terms of assembly, interacts with doxa-1 and bli-3. As to expression, expressed in the body wall (hyp7 hypodermal syncitium), pharynx and vulva. Expressed in a punctate pattern along the thick region of the hypodermis.

Its subcellular location is the membrane. Plays a role in cuticle biogenesis. In complex with doxa-1 and the dual oxidase bli-3, promotes the generation of reactive oxygen species (ROS) and tyrosine cross-linking of collagen, thus stabilizing cuticular extracellular matrix. This chain is Tetraspanin-15, found in Caenorhabditis elegans.